A 154-amino-acid chain; its full sequence is MMTYEGKLIAEGLKFGIVAARFNEFITNKLVGGALDALLRHGVAESDIEIAWVPGAFEIPLVAQKMAETKKYDAIICLGAVIRGATPHFDFVSAEVSKGVAHVGLETKLPVVFGVLTTDTIEQAIERAGTKAGNKGFDSAITAIETVNLLKMIQ.

Residues Phe22, 56 to 58 (AFE), and 80 to 82 (AVI) each bind 5-amino-6-(D-ribitylamino)uracil. A (2S)-2-hydroxy-3-oxobutyl phosphate-binding site is contributed by 85–86 (AT). The active-site Proton donor is the His88. Phe113 lines the 5-amino-6-(D-ribitylamino)uracil pocket. Residue Arg127 participates in (2S)-2-hydroxy-3-oxobutyl phosphate binding.

The protein belongs to the DMRL synthase family.

The catalysed reaction is (2S)-2-hydroxy-3-oxobutyl phosphate + 5-amino-6-(D-ribitylamino)uracil = 6,7-dimethyl-8-(1-D-ribityl)lumazine + phosphate + 2 H2O + H(+). It participates in cofactor biosynthesis; riboflavin biosynthesis; riboflavin from 2-hydroxy-3-oxobutyl phosphate and 5-amino-6-(D-ribitylamino)uracil: step 1/2. In terms of biological role, catalyzes the formation of 6,7-dimethyl-8-ribityllumazine by condensation of 5-amino-6-(D-ribitylamino)uracil with 3,4-dihydroxy-2-butanone 4-phosphate. This is the penultimate step in the biosynthesis of riboflavin. This Desulfitobacterium hafniense (strain DSM 10664 / DCB-2) protein is 6,7-dimethyl-8-ribityllumazine synthase.